A 231-amino-acid polypeptide reads, in one-letter code: Lactate utilization protein C (231 aa).

It belongs to the LutC/YkgG family.

Is involved in L-lactate degradation and allows cells to grow with lactate as the sole carbon source. The polypeptide is Lactate utilization protein C (Macrococcus caseolyticus (strain JCSC5402) (Macrococcoides caseolyticum)).